The chain runs to 299 residues: Protoheme IX farnesyltransferase 1 (299 aa).

9 consecutive transmembrane segments (helical) span residues 24 to 44 (VVAL…PGVP), 46 to 66 (AAVV…AAMV), 97 to 117 (LLVA…CCNA), 118 to 138 (LTAW…TLLL), 146 to 166 (IVIG…AVNG), 170 to 190 (AFAL…FWAL), 217 to 237 (LSIV…VALG), 239 to 259 (AGAI…FLAV), and 278 to 298 (IWYL…LIPL).

This sequence belongs to the UbiA prenyltransferase family. Protoheme IX farnesyltransferase subfamily.

Its subcellular location is the cell inner membrane. It carries out the reaction heme b + (2E,6E)-farnesyl diphosphate + H2O = Fe(II)-heme o + diphosphate. It functions in the pathway porphyrin-containing compound metabolism; heme O biosynthesis; heme O from protoheme: step 1/1. In terms of biological role, converts heme B (protoheme IX) to heme O by substitution of the vinyl group on carbon 2 of heme B porphyrin ring with a hydroxyethyl farnesyl side group. The polypeptide is Protoheme IX farnesyltransferase 1 (Chromobacterium violaceum (strain ATCC 12472 / DSM 30191 / JCM 1249 / CCUG 213 / NBRC 12614 / NCIMB 9131 / NCTC 9757 / MK)).